A 302-amino-acid chain; its full sequence is Recombination-associated protein RdgC (302 aa).

This sequence belongs to the RdgC family.

It localises to the cytoplasm. Its subcellular location is the nucleoid. Functionally, may be involved in recombination. This chain is Recombination-associated protein RdgC, found in Halorhodospira halophila (strain DSM 244 / SL1) (Ectothiorhodospira halophila (strain DSM 244 / SL1)).